The following is a 219-amino-acid chain: Histone H1.4 (219 aa).

A compositionally biased stretch (low complexity) spans 1-15 (MSETAPAAPAAPAPA). The disordered stretch occupies residues 1-41 (MSETAPAAPAAPAPAEKTPIKKKARKAAGGAKRKASGPPVS). Serine 2 bears the N-acetylserine mark. The residue at position 2 (serine 2) is a Phosphoserine. Lysine 17 is modified (N6-acetyllysine). Residue threonine 18 is modified to Phosphothreonine. The segment covering 20-35 (IKKKARKAAGGAKRKA) has biased composition (basic residues). Lysine 26 bears the N6-acetyllysine; alternate mark. Lysine 26 carries the N6-methyllysine; alternate modification. Lysine 34 carries the N6-(beta-hydroxybutyryl)lysine; alternate modification. Lysine 34 carries the N6-succinyllysine; alternate modification. At serine 36 the chain carries Phosphoserine. Residues 36-109 (SGPPVSELIT…GASGSFKLNK (74 aa)) enclose the H15 domain. Lysine 52 bears the N6-(beta-hydroxybutyryl)lysine mark. Arginine 54 bears the Citrulline mark. N6-(beta-hydroxybutyryl)lysine occurs at positions 64, 85, 90, and 106. Residues 92–219 (TLVQTKGTGA…KPKKTAAKKK (128 aa)) are disordered. Residues 119-140 (KAKKAGAAKAKKPAGAAKKPKK) are compositionally biased toward basic residues. The residue at position 146 (threonine 146) is a Phosphothreonine. Basic residues-rich tracts occupy residues 149 to 160 (KSTKKTPKKAKK) and 168 to 185 (KKAKSPKKAKATKAKKAP). The residue at position 150 (serine 150) is an ADP-ribosylserine. A Phosphoserine modification is found at serine 187. Positions 192–219 (RAVKPKAAKPKTSKPKAAKPKKTAAKKK) are enriched in basic residues.

The protein belongs to the histone H1/H5 family. In terms of processing, H1 histones are progressively phosphorylated during the cell cycle, becoming maximally phosphorylated during late G2 phase and M phase, and being dephosphorylated sharply thereafter. Acetylated at Lys-26. Deacetylated at Lys-26 by SIRT1. Post-translationally, citrullination at Arg-54 (H1R54ci) by PADI4 takes place within the DNA-binding site of H1 and results in its displacement from chromatin and global chromatin decondensation, thereby promoting pluripotency and stem cell maintenance. In terms of processing, ADP-ribosylated on Ser-150 in response to DNA damage.

It is found in the nucleus. The protein resides in the chromosome. Functionally, histone H1 protein binds to linker DNA between nucleosomes forming the macromolecular structure known as the chromatin fiber. Histones H1 are necessary for the condensation of nucleosome chains into higher-order structured fibers. Also acts as a regulator of individual gene transcription through chromatin remodeling, nucleosome spacing and DNA methylation. The sequence is that of Histone H1.4 from Rattus norvegicus (Rat).